A 1001-amino-acid polypeptide reads, in one-letter code: X-linked retinitis pigmentosa GTPase regulator (1001 aa).

6 RCC1 repeats span residues 54–105 (NKLY…STDT), 106–158 (GGVY…LTED), 159–208 (GKLF…VTMD), 209–261 (GELY…LTEK), 262–313 (VVYA…MTEL), and 314–367 (GLLY…FATP). The segment at 404 to 428 (SLSARLRRRERERPPCSASMVGTLP) is disordered. Ser-518 bears the Phosphoserine mark. Basic and acidic residues-rich tracts occupy residues 631–641 (KKIRESEENSK) and 659–671 (EDNKDIAEERRSS). Disordered regions lie at residues 631-738 (KKIR…WYDR), 794-869 (NLEF…EGSE), 902-925 (PKGHMYDRVKSSSSEILGGNDPTS), and 962-1001 (GDQIALQSDKKDANQNHMGQNLQDSTTPNMEGKSKSCTIL). Composition is skewed to acidic residues over residues 679-691 (SETELVEEPDSYM) and 717-731 (EKDEKDEKDDDEVET). Composition is skewed to basic and acidic residues over residues 794-818 (NLEFEGDRKEAKAEAPSDVITEKEA), 847-857 (EERKEGEKEIV), and 902-911 (PKGHMYDRVK). Residues 976–1001 (QNHMGQNLQDSTTPNMEGKSKSCTIL) are compositionally biased toward polar residues. Position 998 is a cysteine methyl ester (Cys-998). Residue Cys-998 is the site of S-geranylgeranyl cysteine attachment. A propeptide spans 999–1001 (TIL) (removed in mature form).

As to quaternary structure, interacts with SPATA7. Interacts with PDE6D. Interacts with RPGRIP1 and RPGRIP1L; PDE6D, RPGRIP1 and RPGRIP1L may compete for the same binding sites. Interacts with NPM1. Interacts with PDE6D. Isoform 5 interacts (via N-terminus) with SMC1A and SMC3. Isoform 5 interacts with CEP290. Interacts with WHRN. Interacts with RAB37 and RAB8A (in GDP-bound forms); functions as GEF for RAB37 and RAB8A. Prenylated. In terms of tissue distribution, expressed in the retina (at protein level). Located mainly in the connecting cilia between the outer segment and inner segment and also observed in the outer plexiform layer, inner plexiform layer, and ganglion cell layer of the retinas. Isoform 1: Expressed in the retina (at protein level). Isoform 5: Expressed in the retina (at protein level). Expressed in the brain. Expressed in the testis (at protein level). Expressed in kidney (at protein level).

It is found in the golgi apparatus. The protein localises to the cytoplasm. Its subcellular location is the cytoskeleton. The protein resides in the microtubule organizing center. It localises to the centrosome. It is found in the cell projection. The protein localises to the cilium. Its subcellular location is the cilium basal body. The protein resides in the cilium axoneme. It localises to the flagellum axoneme. Functionally, acts as a guanine-nucleotide releasing factor (GEF) for RAB8A and RAB37 by promoting the conversion of inactive RAB-GDP to the active form RAB-GTP. GEF activity towards RAB8A may facilitate ciliary trafficking by modulating ciliary intracellular localization of RAB8A. GEF activity towards RAB37 maintains autophagic homeostasis and retinal function. Involved in photoreceptor integrity. May control cilia formation by regulating actin stress filaments and cell contractility. May be involved in microtubule organization and regulation of transport in primary cilia. Its function is as follows. Isoform 5 may play a critical role in spermatogenesis and in intraflagellar transport processes. In Mus musculus (Mouse), this protein is X-linked retinitis pigmentosa GTPase regulator.